A 148-amino-acid chain; its full sequence is UPF0260 protein YcgN (148 aa).

This sequence belongs to the UPF0260 family.

This chain is UPF0260 protein YcgN, found in Salmonella paratyphi A (strain AKU_12601).